A 343-amino-acid polypeptide reads, in one-letter code: Anthranilate phosphoribosyltransferase (343 aa).

Residues glycine 86, 89–90 (GD), threonine 94, 96–99 (NIST), 114–122 (KHGNRSASG), and serine 126 each bind 5-phospho-alpha-D-ribose 1-diphosphate. Residue glycine 86 participates in anthranilate binding. Serine 98 provides a ligand contact to Mg(2+). Anthranilate is bound at residue asparagine 117. Residue arginine 172 participates in anthranilate binding. Residues aspartate 231 and glutamate 232 each contribute to the Mg(2+) site.

This sequence belongs to the anthranilate phosphoribosyltransferase family. In terms of assembly, homodimer. Requires Mg(2+) as cofactor.

The catalysed reaction is N-(5-phospho-beta-D-ribosyl)anthranilate + diphosphate = 5-phospho-alpha-D-ribose 1-diphosphate + anthranilate. Its pathway is amino-acid biosynthesis; L-tryptophan biosynthesis; L-tryptophan from chorismate: step 2/5. Functionally, catalyzes the transfer of the phosphoribosyl group of 5-phosphorylribose-1-pyrophosphate (PRPP) to anthranilate to yield N-(5'-phosphoribosyl)-anthranilate (PRA). The protein is Anthranilate phosphoribosyltransferase of Synechococcus sp. (strain JA-2-3B'a(2-13)) (Cyanobacteria bacterium Yellowstone B-Prime).